The sequence spans 533 residues: Probable polyamine oxidase 5 (533 aa).

E37, R45, V262, and E501 together coordinate FAD.

Belongs to the flavin monoamine oxidase family. FAD serves as cofactor. In terms of tissue distribution, expressed in root vasculature, leaves and stems.

The protein localises to the cytoplasm. It catalyses the reaction spermine + O2 + H2O = 3-aminopropanal + spermidine + H2O2. It carries out the reaction N(1)-acetylspermine + O2 + H2O = 3-acetamidopropanal + spermidine + H2O2. The enzyme catalyses norspermine + O2 + H2O = norspermidine + 3-aminopropanal + H2O2. The catalysed reaction is thermospermine + O2 + H2O = 3-aminopropanal + spermidine + H2O2. The protein operates within amine and polyamine degradation; spermine degradation. In terms of biological role, flavoenzyme involved in polyamine back-conversion. Catalyzes the oxidation of the secondary amino group of polyamines, such as spermine and its acetyl derivatives. Substrate preference is spermine &gt; N(1)-acetylspermine &gt; thermospermine &gt; norspermine. Plays an important role in the regulation of polyamine intracellular concentration. Involved in xylem differentiation by controlling thermospermine homeostasis, and participating in the tightly controlled interplay between auxin and cytokinin that is necessary for proper xylem differentiation. Involved in the production of hydrogen peroxide in response to salt and cold stresses. The protein is Probable polyamine oxidase 5 of Arabidopsis thaliana (Mouse-ear cress).